The chain runs to 406 residues: Tryptophan 2,3-dioxygenase (406 aa).

S19 is subject to Phosphoserine. Residues 72–76 (FIITH) and R144 contribute to the substrate site. Residue H328 coordinates heme. T342 lines the substrate pocket.

The protein belongs to the tryptophan 2,3-dioxygenase family. In terms of assembly, homotetramer. Dimer of dimers. Heme is required as a cofactor. In terms of tissue distribution, liver.

The catalysed reaction is L-tryptophan + O2 = N-formyl-L-kynurenine. It participates in amino-acid degradation; L-tryptophan degradation via kynurenine pathway; L-kynurenine from L-tryptophan: step 1/2. In terms of biological role, heme-dependent dioxygenase that catalyzes the oxidative cleavage of the L-tryptophan (L-Trp) pyrrole ring and converts L-tryptophan to N-formyl-L-kynurenine. Catalyzes the oxidative cleavage of the indole moiety. The sequence is that of Tryptophan 2,3-dioxygenase from Rattus norvegicus (Rat).